Reading from the N-terminus, the 473-residue chain is Probable transporter MCH2 (473 aa).

The Cytoplasmic portion of the chain corresponds to 1–37; that stretch reads MSEERHEDHHRDVENKLNLNGKDDINGNTSISIEVPD. Residues 38–58 form a helical membrane-spanning segment; that stretch reads GGYGWFILLAFILYNFSTWGA. Topologically, residues 59 to 83 are extracellular; sequence NSGYAIYLAHYLENNTFAGGSKLDY. Asn72 is a glycosylation site (N-linked (GlcNAc...) asparagine). Residues 84 to 105 traverse the membrane as a helical segment; the sequence is ASIGGLAFSCGLFFAPVITWLY. Residues 106 to 111 are Cytoplasmic-facing; the sequence is HIFSIQ. The chain crosses the membrane as a helical span at residues 112–135; that stretch reads FIIGLGILFQGAALLLAAFSVTLW. The Extracellular segment spans residues 136–141; the sequence is EIYLTQ. The chain crosses the membrane as a helical span at residues 142-163; sequence GVLIGFGLAFIFIPSVTLIPLW. The Cytoplasmic portion of the chain corresponds to 164–169; it reads FRNKRS. The chain crosses the membrane as a helical span at residues 170 to 186; that stretch reads LASGIGTAGSGLGGIVF. The Extracellular portion of the chain corresponds to 187–200; that stretch reads NLGMQSILQKRGVK. The chain crosses the membrane as a helical span at residues 201 to 220; sequence WALIAQCIICTSLSTIALML. The Cytoplasmic portion of the chain corresponds to 221 to 243; it reads TRTTHQGLRQHKRSYKFELLDYD. A helical membrane pass occupies residues 244–268; that stretch reads VLSNFAVWLLFGFVSFAMLGYVVLL. The Extracellular segment spans residues 269-286; that stretch reads YSLSDFTVSLGYTSKQGS. The chain crosses the membrane as a helical span at residues 287–304; it reads YVSCMVSVGSLLGRPIVG. Residues 305 to 312 lie on the Cytoplasmic side of the membrane; it reads HIADKYGS. The chain crosses the membrane as a helical span at residues 313-332; the sequence is LTVGMILHLVMAILCWAMWI. At 333–342 the chain is on the extracellular side; that stretch reads PCKNLATAIA. A helical transmembrane segment spans residues 343 to 362; sequence FGLLVGSIMGTIWPTIASIV. Residues 363 to 370 are Cytoplasmic-facing; the sequence is TRIVGLQK. A helical membrane pass occupies residues 371–394; that stretch reads LPGTFGSTWIFMAAFALVAPIIGL. Residues 395 to 408 are Extracellular-facing; the sequence is ELRSTDTNGNDYYR. The helical transmembrane segment at 409-433 threads the bilayer; sequence TAIFVGFAYFGVSLCQWLLRGFIIA. The Cytoplasmic portion of the chain corresponds to 434-473; it reads RDEIAVREAYSADQNELHLNVKLSHMSKCLFRYKQLPRRV.

This sequence belongs to the major facilitator superfamily. Monocarboxylate porter (TC 2.A.1.13) family.

The protein localises to the membrane. In terms of biological role, probable transporter. Does not act in the transport of monocarboxylic acids across the plasma membrane. This chain is Probable transporter MCH2 (MCH2), found in Saccharomyces cerevisiae (strain ATCC 204508 / S288c) (Baker's yeast).